A 153-amino-acid chain; its full sequence is Small ribosomal subunit protein bS16 (153 aa).

The span at 121–131 (AEAAAKAKAEA) shows a compositional bias: basic and acidic residues. The tract at residues 121–153 (AEAAAKAKAEAEAAAAAEEAPAEEAAEEAPAED) is disordered. Over residues 140-153 (APAEEAAEEAPAED) the composition is skewed to acidic residues.

The protein belongs to the bacterial ribosomal protein bS16 family.

This Bifidobacterium longum (strain DJO10A) protein is Small ribosomal subunit protein bS16.